A 325-amino-acid chain; its full sequence is Treponemal membrane protein B (325 aa).

Residues 1–24 (MKTRNFSLVSALYVLLGVPLFVSA) form the signal peptide. Residues 159–166 (EAARKAAE) form an EAARKAAE repeat. One copy of the ARKLEEQRIAAQKAQEERKRAEE repeat lies at 167-189 (ARKLEEQRIAAQKAQEERKRAEE). Positions 176 to 224 (AAQKAQEERKRAEEEAARKAAEARKLEEQRIAAQKAQEERKRAEEEAAR) are disordered. The stretch at 190–197 (EAARKAAE) is one EAARKAAE repeat. The ARKLEEQRIAAQKAQEERKRAEE repeat unit spans residues 198–220 (ARKLEEQRIAAQKAQEERKRAEE). Residues 221-228 (EAARKAAE) form an EAARKAAE repeat. The stretch at 229–236 (EAARKAEE) is one EAARKAEE repeat.

The protein to T.phagedenis TmpB.

It localises to the cell outer membrane. In terms of biological role, tmp may serve as a porin or transport protein for large molecules. This is Treponemal membrane protein B (tmpB) from Treponema pallidum (strain Nichols).